The primary structure comprises 93 residues: UPF0223 protein gbs1030 (93 aa).

It belongs to the UPF0223 family.

The sequence is that of UPF0223 protein gbs1030 from Streptococcus agalactiae serotype III (strain NEM316).